Here is a 216-residue protein sequence, read N- to C-terminus: Ras-related protein RABE1a (216 aa).

GTP is bound at residue 22–29; that stretch reads GDSGVGKS. The Effector region signature appears at 44–52; sequence FITTIGIDF. GTP-binding positions include 70 to 74, 128 to 131, and 159 to 160; these read DTAGQ, NKAD, and SA. A disordered region spans residues 185–216; it reads DARAEPQTIKINQSDQGAGTSQATQKSACCGT. Residues 193–216 show a composition bias toward polar residues; sequence IKINQSDQGAGTSQATQKSACCGT. 2 S-geranylgeranyl cysteine lipidation sites follow: cysteine 213 and cysteine 214.

It belongs to the small GTPase superfamily. Rab family. In terms of assembly, interacts with PI5K2.

It localises to the golgi apparatus membrane. It is found in the cell membrane. Its function is as follows. Involved in membrane trafficking from the Golgi to the plasma membrane. The sequence is that of Ras-related protein RABE1a (RABE1A) from Arabidopsis thaliana (Mouse-ear cress).